Consider the following 222-residue polypeptide: Peroxisomal membrane protein 11-4 (222 aa).

Over 1-81 (MSAGDTLDKL…LNGLRRAPGE (81 aa)) the chain is Cytoplasmic. The chain crosses the membrane as a helical span at residues 82-102 (FGALAVLANAGEMVYFFFDHF). At 103 to 196 (TWLSRVGVLD…IGIADIEPNP (94 aa)) the chain is on the lumenal side. Residues 197 to 217 (FCNHAVTLGISGLVSAWAGWY) traverse the membrane as a helical segment. At 218–222 (RNWPS) the chain is on the cytoplasmic side.

It belongs to the peroxin-11 family. Expressed in seedlings, shoots, leaf sheaths and flag leaf.

The protein localises to the peroxisome membrane. Its function is as follows. Involved in peroxisomal proliferation. The polypeptide is Peroxisomal membrane protein 11-4 (PEX11-4) (Oryza sativa subsp. indica (Rice)).